The primary structure comprises 38 residues: CHH precursor-related peptide (38 aa).

The disordered stretch occupies residues 18–38 (GALEPSTPLGDLSGSLGHPVE).

As to expression, produced by the medulla terminalis X-organ in the eyestalks and transported to the sinus gland where it is stored and released.

It localises to the secreted. The chain is CHH precursor-related peptide from Cancer pagurus (Rock crab).